The chain runs to 105 residues: Protein LITTLE ZIPPER 2 (105 aa).

The tract at residues 1–20 (MCLTTSEPPFPDTDTPTMRS) is disordered. Residues 39-60 (NLTRRRRLLKEQKEMEMRNLKL) are a coiled coil.

As to quaternary structure, interacts with REV.

Its function is as follows. Competitive inhibitor of the HD-ZIPIII transcription factors in shoot apical meristem (SAM) development. Acts by forming non-functional heterodimers. Part of a negative feedback loop. Essential for proper functioning of stem cells in the SAM. This is Protein LITTLE ZIPPER 2 from Arabidopsis thaliana (Mouse-ear cress).